The sequence spans 668 residues: DNA ligase (668 aa).

Residues 32–36 (DSEYD), 81–82 (SL), and Glu-110 contribute to the NAD(+) site. Residue Lys-112 is the N6-AMP-lysine intermediate of the active site. NAD(+) is bound by residues Arg-133, Glu-167, Lys-283, and Lys-307. Zn(2+) is bound by residues Cys-401, Cys-404, Cys-419, and Cys-424. Residues 586–668 (QTDSEFNGKT…IQKQKEVENK (83 aa)) enclose the BRCT domain.

It belongs to the NAD-dependent DNA ligase family. LigA subfamily. The cofactor is Mg(2+). Mn(2+) is required as a cofactor.

The enzyme catalyses NAD(+) + (deoxyribonucleotide)n-3'-hydroxyl + 5'-phospho-(deoxyribonucleotide)m = (deoxyribonucleotide)n+m + AMP + beta-nicotinamide D-nucleotide.. DNA ligase that catalyzes the formation of phosphodiester linkages between 5'-phosphoryl and 3'-hydroxyl groups in double-stranded DNA using NAD as a coenzyme and as the energy source for the reaction. It is essential for DNA replication and repair of damaged DNA. In Staphylococcus carnosus (strain TM300), this protein is DNA ligase.